We begin with the raw amino-acid sequence, 202 residues long: Small ribosomal subunit protein uS4 (202 aa).

Positions 22-43 (TRKSARRAYPPGQHGQNRRKRS) are disordered. The S4 RNA-binding domain occupies 90 to 152 (MRLDNTVFRL…EKSKEMVKTN (63 aa)).

The protein belongs to the universal ribosomal protein uS4 family. As to quaternary structure, part of the 30S ribosomal subunit. Contacts protein S5. The interaction surface between S4 and S5 is involved in control of translational fidelity.

Functionally, one of the primary rRNA binding proteins, it binds directly to 16S rRNA where it nucleates assembly of the body of the 30S subunit. With S5 and S12 plays an important role in translational accuracy. The protein is Small ribosomal subunit protein uS4 of Trichodesmium erythraeum (strain IMS101).